The sequence spans 192 residues: 7-methyl-GTP pyrophosphatase (192 aa).

The active-site Proton acceptor is the aspartate 69.

The protein belongs to the Maf family. YceF subfamily. Requires a divalent metal cation as cofactor.

It is found in the cytoplasm. The enzyme catalyses N(7)-methyl-GTP + H2O = N(7)-methyl-GMP + diphosphate + H(+). Nucleoside triphosphate pyrophosphatase that hydrolyzes 7-methyl-GTP (m(7)GTP). May have a dual role in cell division arrest and in preventing the incorporation of modified nucleotides into cellular nucleic acids. The sequence is that of 7-methyl-GTP pyrophosphatase from Pseudomonas fluorescens (strain ATCC BAA-477 / NRRL B-23932 / Pf-5).